The sequence spans 431 residues: Glutamate-1-semialdehyde 2,1-aminomutase (431 aa).

Lys269 carries the N6-(pyridoxal phosphate)lysine modification.

The protein belongs to the class-III pyridoxal-phosphate-dependent aminotransferase family. HemL subfamily. Homodimer. Requires pyridoxal 5'-phosphate as cofactor.

The protein localises to the cytoplasm. The enzyme catalyses (S)-4-amino-5-oxopentanoate = 5-aminolevulinate. It participates in porphyrin-containing compound metabolism; protoporphyrin-IX biosynthesis; 5-aminolevulinate from L-glutamyl-tRNA(Glu): step 2/2. Its pathway is porphyrin-containing compound metabolism; chlorophyll biosynthesis. This is Glutamate-1-semialdehyde 2,1-aminomutase from Chlorobium phaeovibrioides (strain DSM 265 / 1930) (Prosthecochloris vibrioformis (strain DSM 265)).